Consider the following 351-residue polypeptide: Small ribosomal subunit biogenesis GTPase RsgA 1 (351 aa).

The CP-type G domain occupies 100 to 258 (LRTDAQIVAS…IIDTPGMREL (159 aa)). Residues 148-151 (SKVD) and 200-208 (GSSGAGKST) contribute to the GTP site. Cysteine 282, cysteine 287, histidine 289, and cysteine 295 together coordinate Zn(2+).

Belongs to the TRAFAC class YlqF/YawG GTPase family. RsgA subfamily. Monomer. Associates with 30S ribosomal subunit, binds 16S rRNA. Requires Zn(2+) as cofactor.

The protein resides in the cytoplasm. In terms of biological role, one of several proteins that assist in the late maturation steps of the functional core of the 30S ribosomal subunit. Helps release RbfA from mature subunits. May play a role in the assembly of ribosomal proteins into the subunit. Circularly permuted GTPase that catalyzes slow GTP hydrolysis, GTPase activity is stimulated by the 30S ribosomal subunit. This chain is Small ribosomal subunit biogenesis GTPase RsgA 1, found in Oceanobacillus iheyensis (strain DSM 14371 / CIP 107618 / JCM 11309 / KCTC 3954 / HTE831).